The chain runs to 185 residues: Elongation factor P (185 aa).

Belongs to the elongation factor P family.

The protein localises to the cytoplasm. It functions in the pathway protein biosynthesis; polypeptide chain elongation. Functionally, involved in peptide bond synthesis. Stimulates efficient translation and peptide-bond synthesis on native or reconstituted 70S ribosomes in vitro. Probably functions indirectly by altering the affinity of the ribosome for aminoacyl-tRNA, thus increasing their reactivity as acceptors for peptidyl transferase. The protein is Elongation factor P of Caldicellulosiruptor bescii (strain ATCC BAA-1888 / DSM 6725 / KCTC 15123 / Z-1320) (Anaerocellum thermophilum).